The following is a 920-amino-acid chain: MKEQEFSYREAKDVSLDSKGLENSFLSSPNREKTPLFFEGNSNETSGYDQTKNFTHGDGDMSLGNLSELNVATDLLESLDLRSMYMHGYGHLDSSFSSQHSPDNRKRMSSTSVFKRINSEEEGRIPSLTYSAGTMNSTSSSTASLKGADIVADYETFNPDQNLAELSFDRSKSSRKRAVEVAEFSRAKTMSPLEYTVQHPYQSHNELSTNPARARAGSVPNLARIPSDVKPVPPAHLSASSTVGPRILPSLPKDTTEDNPALERVETTASLDMDYKPLEPLAPIQEAPVEDTSEPFSSVPEATLDDSDISTESLRKKVLAKMEAKRISSGSSYASTLRKVYDFSELSLPTNGKDYDELYLQSSRNSEPEISTIINDSLQQENMDEDISATSIPKSQAAYGHGSVTYHEVPRYNLTSASVGYSISSQRGRIKSSSTIDNLSAILSSEDLRHPSMQPVPGTKRTYSNYCENEPNKSSQSLVSSESHNVEGWNYSETGTVGFYDPSAEISASIDELRQSTPVARDSELLSRAHSFDLNRLDLPSQDKSTSYEVPNGTENQSPRPVTSLGFVNETFFEEKPKAPLPLGRFYIHLNSILNISISEVHSPIKIIVNTPTQNMQLPWQAVNGNNRLDHDFAFHVDDNFKVSFMFLDIPIEDKSNGSKGVSATKDVSNGKPAETKSKARKFFDKLFNRRKKRKLNKAAAVENSKAKKSVVIKKVSGTATLNLGNVKDSCFGKAFNVEIPIISRGFLEAIPVKINSIGKRTLGNLTLTCLYIPELSVPEQELPFTLEQATMDLRHVRSNYLYNEGYLYRLEDSSIRRRFVVLRSKQLNFYAEKGGQYLDTFQLSKTVVSIPMVNFSEAVSNLGLVAGILATSVDRRHVQLFADSKKVCQKWLQVMNSRSFALDRGTEKLWLQEYVNFMA.

Residues 1-452 (MKEQEFSYRE…LSSEDLRHPS (452 aa)) form a disordered region. 2 positions are modified to phosphoserine: serine 15 and serine 24. Residue threonine 34 is modified to Phosphothreonine. Phosphoserine occurs at positions 46 and 62. A Nuclear export sequence (NES) 1 motif is present at residues 69-81 (LNVATDLLESLDL). Serine 95 carries the post-translational modification Phosphoserine. Residues 461-481 (RTYSNYCENEPNKSSQSLVSS) are compositionally biased toward polar residues. Serine 531 carries the phosphoserine modification. The interval 538 to 561 (DLPSQDKSTSYEVPNGTENQSPRP) is disordered. Residues 542-561 (QDKSTSYEVPNGTENQSPRP) are compositionally biased toward polar residues. Positions 551–920 (PNGTENQSPR…WLQEYVNFMA (370 aa)) are cryptic lipid-binding C2 domain. The Nuclear localization sequence (NLS) motif lies at 681-710 (RKFFDKLFNRRKKRKLNKAAAVENSKAKKS). Positions 763-773 (LGNLTLTCLYI) match the Nuclear export sequence (NES) 2 motif. Positions 802–901 (LYNEGYLYRL…WLQVMNSRSF (100 aa)) constitute a PH domain.

As to quaternary structure, homodimer. Interacts with blt1 and cdr2. Interacts with gef2. Interacts with plo1 and rng2. Interacts with fhk2 and sep1. Interacts with clp1. Post-translationally, phosphorylated. At the onset of mitosis, becomes hyperphosphorylated, leaves the nucleus, and forms a medial ring. Phosphorylation by plo1 and other kinases may contribute to solubilizing mid1 for export from the nucleus. Phosphorylation by sid2 drives removal from the cortex at the actomyosin contractile ring constriction onset.

Its subcellular location is the nucleus. The protein localises to the cytoplasm. It localises to the cell cortex. It is found in the cytoskeleton. Its function is as follows. Scaffold protein that anchors the contractile ring (CR) at the cell equator during cytokinesis. At the onset of mitosis, membrane-bound oligomers of mid1 assemble recruitment platforms for cytokinetic ring components at the medial cortex and stabilize the ring position during its compaction. Recruits dephosphorylated myo2, but also rng2, clp1 and cdc15 to nodes and to place cytokinetic nodes around the cell equator the medial cortex to promote the ring assembly in cooperation with F-actin. Necessary to stabilize the mitotic spindle perpendicular to the axis of cell division. Also recruits the cdr2 kinase to the CR. In the nucleus, binds to the promoter regions of M-G1 transcribed genes to negatively regulate their expression. The protein is Anillin-related medial ring protein mid1 of Schizosaccharomyces pombe (strain 972 / ATCC 24843) (Fission yeast).